The following is an 811-amino-acid chain: Phosphoinositide 3-kinase adapter protein 1 (811 aa).

A TIR domain is found at R8–S146. A necessary and sufficient to mediate inhibition of NF-kappa-B downstream of activated TLRs; may mediate interaction with MYD88 and TIRAP region spans residues C10–D145. The tract at residues S146–N169 is disordered. Residues V182 to F318 enclose the DBB domain. Y264 carries the phosphotyrosine modification. Y420, Y445, and Y460 each carry phosphotyrosine; by SYK. Phosphotyrosine; by ABL1 is present on Y513. The interval D525–E551 is disordered. Positions P530–N550 are enriched in pro residues. Y553, Y570, and Y594 each carry phosphotyrosine; by ABL1. S642 is modified (phosphoserine). Y694 carries the post-translational modification Phosphotyrosine; by ABL1. A disordered region spans residues V702–R811. A compositionally biased stretch (basic and acidic residues) spans T707–T716. Residues D717–S740 are compositionally biased toward low complexity. The residue at position 718 (S718) is a Phosphoserine. Over residues H801–R811 the composition is skewed to pro residues.

Homooligomer. Interacts (phosphorylated on tyrosine residues within YXXM motifs) with PIK3R1 (via SH2 domain); required for BCR- and TLR-mediated activation of phosphoinositide 3-kinase. Interacts (via polyproline C-terminal region) with ABI1 (via SH3 domain); the interaction promotes phosphorylation of PIK3AP1 by ABL1. May interact with MYD88 and TIRAP. Post-translationally, constitutively phosphorylated. Phosphorylated on tyrosine residues in C-terminal region by ABL1. Phosphorylated on tyrosine residues within the YXXM motifs by BTK and SYK. Isoform 1 and isoform 2 are phosphorylated on tyrosine residues, most likely within the YXXM motifs, via CD19 activation. Toll-like receptor activation induces appearance of a phosphorylated form associated with membranes. Predominantly expressed in spleen (at protein level). Expressed at lower levels in thymus, liver and lung. Expressed in B-cells, macrophages and natural killer (NK) cells.

It localises to the cytoplasm. The protein localises to the cell membrane. Its function is as follows. Signaling adapter that contributes to B-cell development by linking B-cell receptor (BCR) signaling to the phosphoinositide 3-kinase (PI3K)-Akt signaling pathway. Has a complementary role to the BCR coreceptor CD19, coupling BCR and PI3K activation by providing a docking site for the PI3K subunit PIK3R1. Alternatively, links Toll-like receptor (TLR) signaling to PI3K activation, a process preventing excessive inflammatory cytokine production. Also involved in the activation of PI3K in natural killer cells. May be involved in the survival of mature B-cells via activation of REL. The polypeptide is Phosphoinositide 3-kinase adapter protein 1 (Pik3ap1) (Mus musculus (Mouse)).